The following is a 710-amino-acid chain: Forkhead box protein P2 (710 aa).

The segment covering methionine 1–aspartate 28 has biased composition (polar residues). 2 disordered regions span residues methionine 1–valine 44 and histidine 272–serine 334. Residues serine 273–glycine 283 show a composition bias toward basic and acidic residues. Over residues threonine 287–serine 300 the composition is skewed to low complexity. The span at serine 310 to leucine 319 shows a compositional bias: polar residues. Residues alanine 321–glycine 332 show a composition bias toward basic and acidic residues. Residues cysteine 343–histidine 366 form a C2H2-type zinc finger. The tract at residues valine 383–leucine 404 is leucine-zipper. The CTBP1-binding stretch occupies residues proline 417–valine 421. The segment covering threonine 433–glutamine 454 has biased composition (low complexity). Positions threonine 433–threonine 460 are disordered. The segment at residues arginine 499 to leucine 589 is a DNA-binding region (fork-head). 2 disordered regions span residues leucine 644 to isoleucine 663 and valine 673 to glutamate 710. Over residues leucine 694–glutamate 710 the composition is skewed to acidic residues.

As to quaternary structure, forms homodimers and heterodimers with FOXP1 and FOXP4. Dimerization is required for DNA-binding. Interacts with CTBP1. Interacts with FOXP1. Interacts with TBR1. Interacts with ZMYM2.

The protein resides in the nucleus. Transcriptional repressor that may play a role in the specification and differentiation of lung epithelium. May also play a role in developing neural, gastrointestinal and cardiovascular tissues. Can act with CTBP1 to synergistically repress transcription but CTPBP1 is not essential. Plays a role in synapse formation by regulating SRPX2 levels. The protein is Forkhead box protein P2 (Foxp2) of Rattus norvegicus (Rat).